Consider the following 348-residue polypeptide: Heat-inducible transcription repressor HrcA (348 aa).

It belongs to the HrcA family.

Negative regulator of class I heat shock genes (grpE-dnaK-dnaJ and groELS operons). Prevents heat-shock induction of these operons. The polypeptide is Heat-inducible transcription repressor HrcA (Thermodesulfovibrio yellowstonii (strain ATCC 51303 / DSM 11347 / YP87)).